The following is a 238-amino-acid chain: ATP synthase subunit a (238 aa).

Helical transmembrane passes span L18–A38, Y75–M95, N112–I132, V179–F199, and I203–L223.

This sequence belongs to the ATPase A chain family. In terms of assembly, F-type ATPases have 2 components, CF(1) - the catalytic core - and CF(0) - the membrane proton channel. CF(1) has five subunits: alpha(3), beta(3), gamma(1), delta(1), epsilon(1). CF(0) has three main subunits: a(1), b(2) and c(9-12). The alpha and beta chains form an alternating ring which encloses part of the gamma chain. CF(1) is attached to CF(0) by a central stalk formed by the gamma and epsilon chains, while a peripheral stalk is formed by the delta and b chains.

Its subcellular location is the cell membrane. Its function is as follows. Key component of the proton channel; it plays a direct role in the translocation of protons across the membrane. The protein is ATP synthase subunit a of Streptococcus agalactiae serotype Ia (strain ATCC 27591 / A909 / CDC SS700).